The chain runs to 44 residues: Photosystem I reaction center subunit IX (44 aa).

The helical transmembrane segment at 9–29 (FIRSAPVVAAVWLSLTAGIII) threads the bilayer.

The protein belongs to the PsaJ family.

Its subcellular location is the cellular thylakoid membrane. May help in the organization of the PsaE and PsaF subunits. The polypeptide is Photosystem I reaction center subunit IX (Prochlorococcus marinus subsp. pastoris (strain CCMP1986 / NIES-2087 / MED4)).